The chain runs to 325 residues: Glutarate 2-hydroxylase (325 aa).

Fe cation contacts are provided by His-160, Asp-162, and His-292.

Belongs to the glutarate hydroxylase family. In terms of assembly, homotetramer. Fe(2+) serves as cofactor.

The enzyme catalyses glutarate + 2-oxoglutarate + O2 = (S)-2-hydroxyglutarate + succinate + CO2. It functions in the pathway amino-acid degradation. Acts as an alpha-ketoglutarate-dependent dioxygenase catalyzing hydroxylation of glutarate (GA) to L-2-hydroxyglutarate (L2HG). Functions in a L-lysine degradation pathway that proceeds via cadaverine, glutarate and L-2-hydroxyglutarate. In Escherichia coli O127:H6 (strain E2348/69 / EPEC), this protein is Glutarate 2-hydroxylase.